A 483-amino-acid polypeptide reads, in one-letter code: Aspartyl/glutamyl-tRNA(Asn/Gln) amidotransferase subunit B (483 aa).

The protein belongs to the GatB/GatE family. GatB subfamily. Heterotrimer of A, B and C subunits.

The catalysed reaction is L-glutamyl-tRNA(Gln) + L-glutamine + ATP + H2O = L-glutaminyl-tRNA(Gln) + L-glutamate + ADP + phosphate + H(+). It catalyses the reaction L-aspartyl-tRNA(Asn) + L-glutamine + ATP + H2O = L-asparaginyl-tRNA(Asn) + L-glutamate + ADP + phosphate + 2 H(+). Functionally, allows the formation of correctly charged Asn-tRNA(Asn) or Gln-tRNA(Gln) through the transamidation of misacylated Asp-tRNA(Asn) or Glu-tRNA(Gln) in organisms which lack either or both of asparaginyl-tRNA or glutaminyl-tRNA synthetases. The reaction takes place in the presence of glutamine and ATP through an activated phospho-Asp-tRNA(Asn) or phospho-Glu-tRNA(Gln). This Rickettsia rickettsii (strain Sheila Smith) protein is Aspartyl/glutamyl-tRNA(Asn/Gln) amidotransferase subunit B.